Consider the following 699-residue polypeptide: Elongation factor G (699 aa).

The tr-type G domain occupies 8–288 (EDYRNFGIMA…AVVDYLPSPM (281 aa)). Residues 17–24 (AHIDAGKT), 86–90 (DTPGH), and 140–143 (NKMD) contribute to the GTP site.

The protein belongs to the TRAFAC class translation factor GTPase superfamily. Classic translation factor GTPase family. EF-G/EF-2 subfamily.

Its subcellular location is the cytoplasm. Its function is as follows. Catalyzes the GTP-dependent ribosomal translocation step during translation elongation. During this step, the ribosome changes from the pre-translocational (PRE) to the post-translocational (POST) state as the newly formed A-site-bound peptidyl-tRNA and P-site-bound deacylated tRNA move to the P and E sites, respectively. Catalyzes the coordinated movement of the two tRNA molecules, the mRNA and conformational changes in the ribosome. The protein is Elongation factor G of Rhizobium johnstonii (strain DSM 114642 / LMG 32736 / 3841) (Rhizobium leguminosarum bv. viciae).